The following is a 550-amino-acid chain: MTNYIAALVDELYQLGVREAVISPGSRSTPLSVLFCEYGFQVYVGIDERSAGFFALGIAKEKERPVVLVCSSGSAVAHYFPAIVEAKHSHVPLIVLTADRPPELRQVGAPQTIDQIKFYHDYAKYFEELALPEEREGMYRYVRGVMRKAYVSSLDQGYGVAHINIPLREPLSPDLDGVDFTAGRLDYPFAWKTGEKGLTMDSSVFQDKKGIIICGGDPYADYHREVLELAERLKAPLLADPLANFRNDDHPLIMDCYDAFLKSDAVKVELKPEFIIHFGQTPVSKRLQNFTAMHQDVLYFQVNDYFQYRDPSLSISRYLVASPKAFARSVKVHNTDDGYSGRWQHYQARMRRRLNLAQDEEELFEGKLVQKLQDSLPEGSRLFVANSMAIRDVDYFLEARRQRIKVLGNRGANGIDGTVSTALGVATSGHPTVLLTGDLAFFHDLNGLLIGKNHGLNLIIVLLNNNGGAIFKYLPQSENKYFELLFMTPHGMDFSGLKTLYDLTYYEPVDYESFAQNFQEALTLSGVKVLNVKIDARLSKELHDRLTNLD.

The protein belongs to the TPP enzyme family. MenD subfamily. In terms of assembly, homodimer. The cofactor is Mg(2+). Requires Mn(2+) as cofactor. It depends on thiamine diphosphate as a cofactor.

It catalyses the reaction isochorismate + 2-oxoglutarate + H(+) = 5-enolpyruvoyl-6-hydroxy-2-succinyl-cyclohex-3-ene-1-carboxylate + CO2. It functions in the pathway quinol/quinone metabolism; 1,4-dihydroxy-2-naphthoate biosynthesis; 1,4-dihydroxy-2-naphthoate from chorismate: step 2/7. Its pathway is quinol/quinone metabolism; menaquinone biosynthesis. Functionally, catalyzes the thiamine diphosphate-dependent decarboxylation of 2-oxoglutarate and the subsequent addition of the resulting succinic semialdehyde-thiamine pyrophosphate anion to isochorismate to yield 2-succinyl-5-enolpyruvyl-6-hydroxy-3-cyclohexene-1-carboxylate (SEPHCHC). The chain is 2-succinyl-5-enolpyruvyl-6-hydroxy-3-cyclohexene-1-carboxylate synthase from Desulfitobacterium hafniense (strain DSM 10664 / DCB-2).